Here is a 437-residue protein sequence, read N- to C-terminus: Tol-Pal system protein TolB (437 aa).

A signal peptide spans 1-23 (MQKRHPIIYLLITLLIFVPVSYG).

The protein belongs to the TolB family. In terms of assembly, the Tol-Pal system is composed of five core proteins: the inner membrane proteins TolA, TolQ and TolR, the periplasmic protein TolB and the outer membrane protein Pal. They form a network linking the inner and outer membranes and the peptidoglycan layer.

The protein resides in the periplasm. Part of the Tol-Pal system, which plays a role in outer membrane invagination during cell division and is important for maintaining outer membrane integrity. The polypeptide is Tol-Pal system protein TolB (Coxiella burnetii (strain RSA 493 / Nine Mile phase I)).